The following is a 79-amino-acid chain: ATP synthase subunit beta (79 aa).

It belongs to the ATPase alpha/beta chains family. F-type ATPases have 2 components, CF(1) - the catalytic core - and CF(0) - the membrane proton channel. CF(1) has five subunits: alpha(3), beta(3), gamma(1), delta(1), epsilon(1). CF(0) has three main subunits: a(1), b(2) and c(9-12). The alpha and beta chains form an alternating ring which encloses part of the gamma chain. CF(1) is attached to CF(0) by a central stalk formed by the gamma and epsilon chains, while a peripheral stalk is formed by the delta and b chains.

Its subcellular location is the cell membrane. The enzyme catalyses ATP + H2O + 4 H(+)(in) = ADP + phosphate + 5 H(+)(out). In terms of biological role, produces ATP from ADP in the presence of a proton gradient across the membrane. The catalytic sites are hosted primarily by the beta subunits. The polypeptide is ATP synthase subunit beta (atpD) (Streptococcus downei (Streptococcus sobrinus)).